We begin with the raw amino-acid sequence, 661 residues long: UvrABC system protein B (661 aa).

One can recognise a Helicase ATP-binding domain in the interval 31–186 (DNIEGGEKAQ…LLNALVDIQF (156 aa)). 44–51 (GATGTGKT) contacts ATP. The short motif at 97–120 (YYDYYQPEAYVPSSDTYIEKDSSV) is the Beta-hairpin element. Positions 435-601 (QMDDLLGEIN…TIKKEIRDLI (167 aa)) constitute a Helicase C-terminal domain. Residues 626–661 (KAMIKKLEGQMQEAAEVLDFELAAQIRDMVIELKNM) form the UVR domain.

It belongs to the UvrB family. In terms of assembly, forms a heterotetramer with UvrA during the search for lesions. Interacts with UvrC in an incision complex.

The protein resides in the cytoplasm. In terms of biological role, the UvrABC repair system catalyzes the recognition and processing of DNA lesions. A damage recognition complex composed of 2 UvrA and 2 UvrB subunits scans DNA for abnormalities. Upon binding of the UvrA(2)B(2) complex to a putative damaged site, the DNA wraps around one UvrB monomer. DNA wrap is dependent on ATP binding by UvrB and probably causes local melting of the DNA helix, facilitating insertion of UvrB beta-hairpin between the DNA strands. Then UvrB probes one DNA strand for the presence of a lesion. If a lesion is found the UvrA subunits dissociate and the UvrB-DNA preincision complex is formed. This complex is subsequently bound by UvrC and the second UvrB is released. If no lesion is found, the DNA wraps around the other UvrB subunit that will check the other stand for damage. This chain is UvrABC system protein B, found in Streptococcus suis (strain 98HAH33).